Here is a 362-residue protein sequence, read N- to C-terminus: Class I histocompatibility antigen, Gogo-OKO alpha chain (362 aa).

A signal peptide spans 1 to 24 (MAVVAPRTLLLLLSGTLALTRTWA). The tract at residues 25 to 114 (GSHSMRYFYT…LRGYYNQSEG (90 aa)) is alpha-1. Residues 25–308 (GSHSMRYFYT…EPSSQPTIPI (284 aa)) are Extracellular-facing. N110 is a glycosylation site (N-linked (GlcNAc...) asparagine). The alpha-2 stretch occupies residues 115–206 (GSHTIQRMYG…ENGKETLQRT (92 aa)). Cystine bridges form between C125/C188 and C227/C283. An alpha-3 region spans residues 207 to 298 (DPPKTHMTHH…GLPKPLTLRW (92 aa)). An Ig-like C1-type domain is found at 209–295 (PKTHMTHHPV…QHEGLPKPLT (87 aa)). Residues 299–308 (EPSSQPTIPI) are connecting peptide. The chain crosses the membrane as a helical span at residues 309–332 (VGIIAGLVLLGAVITGAVVAAMMW). At 333–362 (RKKSSGRKGGSYSQAASSDSAQGSDVSLTA) the chain is on the cytoplasmic side. The interval 337–362 (SGRKGGSYSQAASSDSAQGSDVSLTA) is disordered. The span at 342 to 362 (GSYSQAASSDSAQGSDVSLTA) shows a compositional bias: low complexity.

Belongs to the MHC class I family. In terms of assembly, heterodimer of an alpha chain and a beta chain (beta-2-microglobulin).

The protein resides in the membrane. Its function is as follows. Involved in the presentation of foreign antigens to the immune system. The polypeptide is Class I histocompatibility antigen, Gogo-OKO alpha chain (Gorilla gorilla gorilla (Western lowland gorilla)).